A 954-amino-acid polypeptide reads, in one-letter code: Chromosomal passenger complex protein BIR1 (954 aa).

BIR repeat units follow at residues 20 to 117 and 153 to 241; these read RLRT…LLIY and RKFT…YFFQ. Residues cysteine 208, cysteine 211, histidine 228, and cysteine 237 each coordinate Zn(2+). The tract at residues 375 to 419 is disordered; that stretch reads NVQLTQSSSPIKKKRKFKRISPRKIFDEEDSEHSLNNNSANGDNK. The span at 385-396 shows a compositional bias: basic residues; the sequence is IKKKRKFKRISP. A phosphoserine mark is found at serine 477, serine 508, and serine 552. 2 disordered regions span residues 541-645 and 661-685; these read DIDR…SGKV and FSAS…ISTP. Over residues 556–583 the composition is skewed to basic and acidic residues; the sequence is PKTHELIRDNSEKREAQNGEFRHQKDST. A Phosphoserine modification is found at serine 587. A compositionally biased stretch (polar residues) spans 593–604; the sequence is SNKSGDNSSNIT. Phosphoserine is present on residues serine 751 and serine 765. The disordered stretch occupies residues 798 to 839; the sequence is LVSGTSSYPRNSRLEEQRKETSTSLADNSKKGSSFNEGNNEK. Residues 809 to 818 show a composition bias toward basic and acidic residues; it reads SRLEEQRKET. The segment covering 819-835 has biased composition (polar residues); that stretch reads STSLADNSKKGSSFNEG.

In terms of assembly, component of the CPC complex at least composed of IPL1, BIR1 and SLI15. Interacts with CBF2/NDC10. Interacts with CBF3D/SKP1.

Component of the chromosomal passenger complex (CPC), a complex that acts as a key regulator of chromosome segregation and cytokinesis. This Saccharomyces cerevisiae (strain ATCC 204508 / S288c) (Baker's yeast) protein is Chromosomal passenger complex protein BIR1 (BIR1).